Consider the following 706-residue polypeptide: SPX domain-containing membrane protein OsI_32082 (706 aa).

Residues 2–145 enclose the SPX domain; it reads VNFSNKLTKD…GYKFTDYYVR (144 aa). Transmembrane regions (helical) follow at residues 251 to 271, 281 to 301, 318 to 338, 340 to 359, 378 to 398, and 414 to 434; these read MSLVLNLANTFLYMVNTYIVV, LGAAATACGAVIGSMAVAQVF, LLFSSVVLLLGNVMYAMAFDL, SLTILLLGRVLCGMGSARAV, AAFVSASALGMACGPALAGLL, and LPGWIMAFGWLVYLIWLWISF. The disordered stretch occupies residues 475–498; the sequence is SEQDEEDDNGDEEHNETLSSSTTT. Positions 476–488 are enriched in acidic residues; that stretch reads EQDEEDDNGDEEH. Transmembrane regions (helical) follow at residues 520–540, 554–574, 583–603, 611–631, and 678–698; these read LLIYFMLKYAMEILLAESSVV, VFLAVLGLSVLPVNAIVGTYI, ILVASEMALLAGVMLSFKLTV, VCSAVLTFVSAEVVEGVNLSL, and LLNATLLPALLVCVASIAATL.

Belongs to the major facilitator superfamily.

The protein resides in the membrane. This chain is SPX domain-containing membrane protein OsI_32082, found in Oryza sativa subsp. indica (Rice).